We begin with the raw amino-acid sequence, 353 residues long: Photosystem II protein D1 (353 aa).

N-acetylthreonine is present on threonine 2. A Phosphothreonine modification is found at threonine 2. Helical transmembrane passes span 29–46 (YIGWFGVLMIPTLLTATS), 118–133 (HFLLGVACYMGREWEL), and 142–156 (WIAVAYSAPVAAATA). Histidine 118 is a binding site for chlorophyll a. Tyrosine 126 serves as a coordination point for pheophytin a. Residues aspartate 170 and glutamate 189 each coordinate [CaMn4O5] cluster. A helical transmembrane segment spans residues 197–218 (FHMLGVAGVFGGSLFSAMHGSL). A chlorophyll a-binding site is contributed by histidine 198. A quinone-binding positions include histidine 215 and 264–265 (SF). Histidine 215 is a Fe cation binding site. Residue histidine 272 participates in Fe cation binding. Residues 274 to 288 (FLAAWPVVGIWFTAL) traverse the membrane as a helical segment. [CaMn4O5] cluster is bound by residues histidine 332, glutamate 333, aspartate 342, and alanine 344. Residues 345–353 (AVEVPAING) constitute a propeptide that is removed on maturation.

It belongs to the reaction center PufL/M/PsbA/D family. PSII is composed of 1 copy each of membrane proteins PsbA, PsbB, PsbC, PsbD, PsbE, PsbF, PsbH, PsbI, PsbJ, PsbK, PsbL, PsbM, PsbT, PsbX, PsbY, PsbZ, Psb30/Ycf12, at least 3 peripheral proteins of the oxygen-evolving complex and a large number of cofactors. It forms dimeric complexes. Requires The D1/D2 heterodimer binds P680, chlorophylls that are the primary electron donor of PSII, and subsequent electron acceptors. It shares a non-heme iron and each subunit binds pheophytin, quinone, additional chlorophylls, carotenoids and lipids. D1 provides most of the ligands for the Mn4-Ca-O5 cluster of the oxygen-evolving complex (OEC). There is also a Cl(-1) ion associated with D1 and D2, which is required for oxygen evolution. The PSII complex binds additional chlorophylls, carotenoids and specific lipids. as cofactor. Post-translationally, tyr-161 forms a radical intermediate that is referred to as redox-active TyrZ, YZ or Y-Z. C-terminally processed by CTPA; processing is essential to allow assembly of the oxygen-evolving complex and thus photosynthetic growth.

The protein resides in the plastid. It localises to the chloroplast thylakoid membrane. It catalyses the reaction 2 a plastoquinone + 4 hnu + 2 H2O = 2 a plastoquinol + O2. Functionally, photosystem II (PSII) is a light-driven water:plastoquinone oxidoreductase that uses light energy to abstract electrons from H(2)O, generating O(2) and a proton gradient subsequently used for ATP formation. It consists of a core antenna complex that captures photons, and an electron transfer chain that converts photonic excitation into a charge separation. The D1/D2 (PsbA/PsbD) reaction center heterodimer binds P680, the primary electron donor of PSII as well as several subsequent electron acceptors. The chain is Photosystem II protein D1 from Hordeum vulgare (Barley).